The primary structure comprises 193 residues: Holliday junction branch migration complex subunit RuvA (193 aa).

The tract at residues 1 to 64 (MIGRIAGTLI…EDAHLLYGFG (64 aa)) is domain I. A domain II region spans residues 65–143 (TAAERETFRQ…ADLGTVPGGP (79 aa)). Residues 144 to 151 (AVSDDAVD) form a flexible linker region. The segment at 151–193 (DVLNALLALGYSDKEAALAIKQVPAGTGVSEGIKLALKALSKG) is domain III.

It belongs to the RuvA family. Homotetramer. Forms an RuvA(8)-RuvB(12)-Holliday junction (HJ) complex. HJ DNA is sandwiched between 2 RuvA tetramers; dsDNA enters through RuvA and exits via RuvB. An RuvB hexamer assembles on each DNA strand where it exits the tetramer. Each RuvB hexamer is contacted by two RuvA subunits (via domain III) on 2 adjacent RuvB subunits; this complex drives branch migration. In the full resolvosome a probable DNA-RuvA(4)-RuvB(12)-RuvC(2) complex forms which resolves the HJ.

The protein resides in the cytoplasm. Functionally, the RuvA-RuvB-RuvC complex processes Holliday junction (HJ) DNA during genetic recombination and DNA repair, while the RuvA-RuvB complex plays an important role in the rescue of blocked DNA replication forks via replication fork reversal (RFR). RuvA specifically binds to HJ cruciform DNA, conferring on it an open structure. The RuvB hexamer acts as an ATP-dependent pump, pulling dsDNA into and through the RuvAB complex. HJ branch migration allows RuvC to scan DNA until it finds its consensus sequence, where it cleaves and resolves the cruciform DNA. In Ralstonia pickettii (strain 12J), this protein is Holliday junction branch migration complex subunit RuvA.